A 127-amino-acid polypeptide reads, in one-letter code: Ribosome-binding factor A (127 aa).

The protein belongs to the RbfA family. In terms of assembly, monomer. Binds 30S ribosomal subunits, but not 50S ribosomal subunits or 70S ribosomes.

The protein resides in the cytoplasm. Functionally, one of several proteins that assist in the late maturation steps of the functional core of the 30S ribosomal subunit. Associates with free 30S ribosomal subunits (but not with 30S subunits that are part of 70S ribosomes or polysomes). Required for efficient processing of 16S rRNA. May interact with the 5'-terminal helix region of 16S rRNA. This is Ribosome-binding factor A from Aromatoleum aromaticum (strain DSM 19018 / LMG 30748 / EbN1) (Azoarcus sp. (strain EbN1)).